The following is a 207-amino-acid chain: Thiamine-phosphate synthase (207 aa).

4-amino-2-methyl-5-(diphosphooxymethyl)pyrimidine is bound by residues 36–40 (QLRIK) and Asp68. 2 residues coordinate Mg(2+): Asp69 and Asp88. Residue Ser106 participates in 4-amino-2-methyl-5-(diphosphooxymethyl)pyrimidine binding. 132 to 134 (TQT) serves as a coordination point for 2-[(2R,5Z)-2-carboxy-4-methylthiazol-5(2H)-ylidene]ethyl phosphate. Lys135 lines the 4-amino-2-methyl-5-(diphosphooxymethyl)pyrimidine pocket. 2-[(2R,5Z)-2-carboxy-4-methylthiazol-5(2H)-ylidene]ethyl phosphate is bound by residues Gly162 and 182–183 (VS).

The protein belongs to the thiamine-phosphate synthase family. The cofactor is Mg(2+).

It carries out the reaction 2-[(2R,5Z)-2-carboxy-4-methylthiazol-5(2H)-ylidene]ethyl phosphate + 4-amino-2-methyl-5-(diphosphooxymethyl)pyrimidine + 2 H(+) = thiamine phosphate + CO2 + diphosphate. The enzyme catalyses 2-(2-carboxy-4-methylthiazol-5-yl)ethyl phosphate + 4-amino-2-methyl-5-(diphosphooxymethyl)pyrimidine + 2 H(+) = thiamine phosphate + CO2 + diphosphate. It catalyses the reaction 4-methyl-5-(2-phosphooxyethyl)-thiazole + 4-amino-2-methyl-5-(diphosphooxymethyl)pyrimidine + H(+) = thiamine phosphate + diphosphate. It participates in cofactor biosynthesis; thiamine diphosphate biosynthesis; thiamine phosphate from 4-amino-2-methyl-5-diphosphomethylpyrimidine and 4-methyl-5-(2-phosphoethyl)-thiazole: step 1/1. Functionally, condenses 4-methyl-5-(beta-hydroxyethyl)thiazole monophosphate (THZ-P) and 2-methyl-4-amino-5-hydroxymethyl pyrimidine pyrophosphate (HMP-PP) to form thiamine monophosphate (TMP). The chain is Thiamine-phosphate synthase from Pyrococcus horikoshii (strain ATCC 700860 / DSM 12428 / JCM 9974 / NBRC 100139 / OT-3).